The primary structure comprises 241 residues: NAD-dependent protein deacylase (241 aa).

Positions 1 to 237 constitute a Deacetylase sirtuin-type domain; the sequence is MNFPYRNIVV…PKLVDEILAL (237 aa). 13–32 is an NAD(+) binding site; sequence GAGISAESGIQTFRAQDGLW. Substrate-binding residues include Y57 and R60. Residue 94 to 97 coordinates NAD(+); that stretch reads QNID. H112 functions as the Proton acceptor in the catalytic mechanism. Residues C120 and C139 each coordinate Zn(2+). NAD(+) contacts are provided by residues 179–181, 205–207, and A223; these read GTS and NLE.

The protein belongs to the sirtuin family. Class III subfamily. As to quaternary structure, monomer. It depends on Zn(2+) as a cofactor.

It localises to the cytoplasm. It is found in the host cytoplasm. The protein localises to the host cytosol. Its subcellular location is the host nucleus. It carries out the reaction N(6)-acetyl-L-lysyl-[protein] + NAD(+) + H2O = 2''-O-acetyl-ADP-D-ribose + nicotinamide + L-lysyl-[protein]. The catalysed reaction is N(6)-succinyl-L-lysyl-[protein] + NAD(+) + H2O = 2''-O-succinyl-ADP-D-ribose + nicotinamide + L-lysyl-[protein]. NAD-dependent lysine deacetylase and desuccinylase that specifically removes acetyl and succinyl groups on target proteins. Modulates the activities of several proteins which are inactive in their acylated form. In the intracellular pathogen V.parahaemolyticus, this enzyme regulates host response during infection by induction of host histone deacetylation; it specifically causes deacetylation of histone lysine residues H3K56, H3K9, H3K18 and H4K16 which results in transcriptional repression of several host genes involved in epigenetic regulation, immune response, and autophagy. The polypeptide is NAD-dependent protein deacylase (Vibrio parahaemolyticus serotype O3:K6 (strain RIMD 2210633)).